A 267-amino-acid chain; its full sequence is Cytokinesis defective protein 7 (267 aa).

A disordered region spans residues Arg-244 to Ala-267. Over residues Gln-258 to Ala-267 the composition is skewed to basic and acidic residues.

The chain is Cytokinesis defective protein 7 from Caenorhabditis elegans.